A 166-amino-acid polypeptide reads, in one-letter code: Monodehydroascorbate reductase, fruit isozyme (166 aa).

The protein belongs to the FAD-dependent oxidoreductase family. It depends on FAD as a cofactor. The N-terminus is blocked.

It carries out the reaction 2 monodehydro-L-ascorbate radical + NADH + H(+) = 2 L-ascorbate + NAD(+). Functionally, catalyzes the conversion of monodehydroascorbate to ascorbate, oxidizing NADH in the process. The sequence is that of Monodehydroascorbate reductase, fruit isozyme from Cucumis sativus (Cucumber).